We begin with the raw amino-acid sequence, 71 residues long: Small ribosomal subunit protein bS18 (71 aa).

Belongs to the bacterial ribosomal protein bS18 family. Part of the 30S ribosomal subunit. Forms a tight heterodimer with protein bS6.

Functionally, binds as a heterodimer with protein bS6 to the central domain of the 16S rRNA, where it helps stabilize the platform of the 30S subunit. The chain is Small ribosomal subunit protein bS18 from Synechococcus elongatus (strain ATCC 33912 / PCC 7942 / FACHB-805) (Anacystis nidulans R2).